The chain runs to 501 residues: Glycine betaine/proline/ectoine/pipecolic acid transporter OusA (501 aa).

At 1–38 the chain is on the cytoplasmic side; sequence MKLKRKRVKPIALDDVTIIDDGRLRKAITAAALGNAME. The helical transmembrane segment at 39 to 59 threads the bilayer; it reads WFDFGVYGFVAYALGQVFFPG. At 60–66 the chain is on the periplasmic side; that stretch reads ADPGVQM. The chain crosses the membrane as a helical span at residues 67-87; that stretch reads IAALATFSVPFLIRPLGGVFF. Over 88-98 the chain is Cytoplasmic; it reads GALGDKYGRQK. A helical membrane pass occupies residues 99–119; the sequence is ILAITIIIMSISTFCIGLIPS. The Periplasmic portion of the chain corresponds to 120-122; it reads YER. A helical transmembrane segment spans residues 123–143; that stretch reads IGIWAPILLLLAKMAQGFSVG. At 144-170 the chain is on the cytoplasmic side; it reads GEYTGASIFVAEYSPDRKRGFMGSWLD. The chain crosses the membrane as a helical span at residues 171 to 191; the sequence is FGSIAGFVLGAGVVVLISTLI. Residues 192–195 lie on the Periplasmic side of the membrane; that stretch reads GEQA. A helical membrane pass occupies residues 196–216; that stretch reads FLAWGWRLPFFLALPLGLIGL. The Cytoplasmic segment spans residues 217–261; it reads YLRHALEETPAFRQHVEKLEQNDRDGLKAGPGVSFREIATHHWKS. Residues 262–282 traverse the membrane as a helical segment; the sequence is LLVCIGLVIATNVTYYMLLTY. Topologically, residues 283–298 are periplasmic; it reads MPSYLSHSLHYSENHG. A helical membrane pass occupies residues 299 to 319; sequence VLIIIAIMIGMLFVQPVMGLL. The Cytoplasmic segment spans residues 320 to 326; it reads SDRFGRK. Residues 327–347 traverse the membrane as a helical segment; it reads PFVVIGSVAMFFLAVPSFMLI. Topologically, residues 348 to 350 are periplasmic; that stretch reads NSD. A helical transmembrane segment spans residues 351–371; that stretch reads IIGLIFLGLLMLAVILNAFTG. The Cytoplasmic segment spans residues 372 to 391; sequence VMASTLPALFPTHIRYSALA. A helical transmembrane segment spans residues 392-412; sequence SAFNISVLIAGLTPTVAAWLV. The Periplasmic segment spans residues 413 to 417; it reads ESSQN. Residues 418–438 traverse the membrane as a helical segment; that stretch reads LYMPAYYLMVIAVIGLLTGLF. Over 439 to 501 the chain is Cytoplasmic; the sequence is MKETANKPLK…LVAQHPRIND (63 aa). The stretch at 461–495 forms a coiled coil; that stretch reads KEILQEHHDNIEHKIEDITQQIAELEAKRQLLVAQ.

It belongs to the major facilitator superfamily. Sugar transporter (TC 2.A.1.1) family.

It localises to the cell inner membrane. Its function is as follows. Involved in uptake and accumulation of various osmoprotectants. Allows the uptake of glycine betaine, proline, ectoine, and pipecolic acid. May be a contributory factor in the infection progression within the host. In Dickeya dadantii (strain 3937) (Erwinia chrysanthemi (strain 3937)), this protein is Glycine betaine/proline/ectoine/pipecolic acid transporter OusA.